Consider the following 311-residue polypeptide: METKNYSSSTSGFILLGLSSNPKLQKPLFAIFLIMYLLTAVGNVLIILAIYSDPRLHTPMYFFLSNLSFMDICFTTVIVPKMLVNFLSETKIISYVGCLIQMYFFMAFGNTDSYLLASMAIDRLVAICNPLHYDVVMKPWHCLLMLLGSCSISHLHSLFRVLLMSRLSFCASHIIKHFFCDTQPVLKLSCSDTSSSQMVVMTETLAVIVTPFLCTIFSYLQIIVTVLRIPSAAGKWKAFSTCGSHLTVVVLFYGSVIYVYFRPLSMYSVMKGRVATVMYTVVTPMLNPFIYSLRNKDMKRGLKKLRHRIYS.

The Extracellular portion of the chain corresponds to 1-26 (METKNYSSSTSGFILLGLSSNPKLQK). N5 carries N-linked (GlcNAc...) asparagine glycosylation. The chain crosses the membrane as a helical span at residues 27–50 (PLFAIFLIMYLLTAVGNVLIILAI). Residues 51-58 (YSDPRLHT) are Cytoplasmic-facing. Residues 59–80 (PMYFFLSNLSFMDICFTTVIVP) form a helical membrane-spanning segment. Over 81 to 101 (KMLVNFLSETKIISYVGCLIQ) the chain is Extracellular. A disulfide bond links C98 and C190. A helical membrane pass occupies residues 102 to 121 (MYFFMAFGNTDSYLLASMAI). The Cytoplasmic portion of the chain corresponds to 122–140 (DRLVAICNPLHYDVVMKPW). A helical transmembrane segment spans residues 141–159 (HCLLMLLGSCSISHLHSLF). The Extracellular segment spans residues 160-197 (RVLLMSRLSFCASHIIKHFFCDTQPVLKLSCSDTSSSQ). A helical transmembrane segment spans residues 198–220 (MVVMTETLAVIVTPFLCTIFSYL). Topologically, residues 221 to 237 (QIIVTVLRIPSAAGKWK) are cytoplasmic. Residues 238–260 (AFSTCGSHLTVVVLFYGSVIYVY) traverse the membrane as a helical segment. The Extracellular segment spans residues 261–273 (FRPLSMYSVMKGR). A helical transmembrane segment spans residues 274–293 (VATVMYTVVTPMLNPFIYSL). At 294 to 311 (RNKDMKRGLKKLRHRIYS) the chain is on the cytoplasmic side.

It belongs to the G-protein coupled receptor 1 family.

It is found in the cell membrane. In terms of biological role, odorant receptor. In Homo sapiens (Human), this protein is Olfactory receptor 1L4 (OR1L4).